Consider the following 163-residue polypeptide: tRNA-acetylating toxin 2 (163 aa).

Residue Tyr137 is part of the active site.

Belongs to the acetyltransferase family. GNAT subfamily. As to quaternary structure, homodimer. Forms a complex with cognate antitoxin TacA2.

The enzyme catalyses glycyl-tRNA(Gly) + acetyl-CoA = N-acetylglycyl-tRNA(Gly) + CoA + H(+). It carries out the reaction L-isoleucyl-tRNA(Ile) + acetyl-CoA = N-acetyl-L-isoleucyl-tRNA(Ile) + CoA + H(+). It catalyses the reaction L-leucyl-tRNA(Leu) + acetyl-CoA = N-acetyl-L-leucyl-tRNA(Leu) + CoA + H(+). Toxic component of a type II toxin-antitoxin (TA) system. Acetylates tRNA and inhibits translation. Acetylates mainly Gly and Ile/Leu in vitro. Overexpression during the lag phase of a tacA2-tacT2 deletion strain leads to a 100-fold increase in persister cells in the presence of cefotaxime and a non-growth state in the absence of antibiotic. This protein, which has a single amino acid compared to S.typhimurium strain 14028s (Lys-29 is Glu in 14028s), produces 100-fold more persister cells, has much higher acetylation activity and binds tRNA much better. Persister cell formation and the growth defect are neutralized by cognate antitoxin TacA2. Its function is as follows. The TacA2-TacT2 complex both represses and derepresses expression of its own operon. This Salmonella enteritidis protein is tRNA-acetylating toxin 2.